Reading from the N-terminus, the 424-residue chain is Fasciclin-like arabinogalactan protein 1 (424 aa).

The N-terminal stretch at 1 to 24 (MAKKMSSLIIIFNILLLLTTQTHA) is a signal peptide. 2 consecutive FAS1 domains span residues 25–170 (HNVT…SRVL) and 184–323 (EMNL…DKVL). Residues asparagine 26, asparagine 128, asparagine 160, asparagine 186, and asparagine 240 are each glycosylated (N-linked (GlcNAc...) asparagine). The segment at 338 to 393 (APAPAPEDGDVADSPKAAKGKAKGKKKKAAPSPDNDPFGDSDSPAEGPDGEADDAT) is disordered. The segment covering 355–366 (AKGKAKGKKKKA) has biased composition (basic residues). Aspartate 396 carries the GPI-anchor amidated aspartate lipid modification. A propeptide spans 397–424 (AGAVRIIGGAKAGLVVSLLCLFASSWLL) (removed in mature form).

Belongs to the fasciclin-like AGP family. Preferentially expressed in flowers.

It is found in the secreted. The protein resides in the extracellular space. It localises to the apoplast. The protein localises to the cell membrane. May be a cell surface adhesion protein. This is Fasciclin-like arabinogalactan protein 1 (FLA1) from Arabidopsis thaliana (Mouse-ear cress).